The following is a 264-amino-acid chain: DNA repair protein RecO (264 aa).

It belongs to the RecO family.

Involved in DNA repair and RecF pathway recombination. In Chlorobium luteolum (strain DSM 273 / BCRC 81028 / 2530) (Pelodictyon luteolum), this protein is DNA repair protein RecO.